The sequence spans 830 residues: Penicillin-binding protein 1A (830 aa).

The segment covering 1 to 17 has biased composition (basic residues); it reads MTERKREHKDRKQKKNS. Residues 1–20 form a disordered region; it reads MTERKREHKDRKQKKNSPKN. The Cytoplasmic segment spans residues 1-30; it reads MTERKREHKDRKQKKNSPKNQSKVTKFLKW. A helical; Signal-anchor for type II membrane protein membrane pass occupies residues 31–51; that stretch reads FFIGILLLGITAVTVVGIYVL. Over 52 to 830 the chain is Extracellular; sequence SIIRSSPELD…QNGQNNNITQ (779 aa). Residues 72–244 are transglycosylase; sequence SILYDDQGNF…PTSYDGLSEA (173 aa). The active-site Proton donor; for transglycosylase activity is Glu111. The transpeptidase stretch occupies residues 378-663; it reads ASATIIDYKT…TSPIFGKIMG (286 aa). Ser417 (acyl-ester intermediate; for transpeptidase activity) is an active-site residue. The interval 731–830 is disordered; the sequence is APDTNDNNNS…QNGQNNNITQ (100 aa). Residues 735-746 are compositionally biased toward low complexity; sequence NDNNNSGANEGN. A compositionally biased stretch (basic and acidic residues) spans 747–758; it reads KQQETKPEEVKP. Composition is skewed to low complexity over residues 759-807 and 816-830; these read NENN…NTNN and GNNQNQNGQNNNITQ.

In the N-terminal section; belongs to the glycosyltransferase 51 family. It in the C-terminal section; belongs to the transpeptidase family.

It localises to the cell membrane. The enzyme catalyses [GlcNAc-(1-&gt;4)-Mur2Ac(oyl-L-Ala-gamma-D-Glu-L-Lys-D-Ala-D-Ala)](n)-di-trans,octa-cis-undecaprenyl diphosphate + beta-D-GlcNAc-(1-&gt;4)-Mur2Ac(oyl-L-Ala-gamma-D-Glu-L-Lys-D-Ala-D-Ala)-di-trans,octa-cis-undecaprenyl diphosphate = [GlcNAc-(1-&gt;4)-Mur2Ac(oyl-L-Ala-gamma-D-Glu-L-Lys-D-Ala-D-Ala)](n+1)-di-trans,octa-cis-undecaprenyl diphosphate + di-trans,octa-cis-undecaprenyl diphosphate + H(+). It carries out the reaction Preferential cleavage: (Ac)2-L-Lys-D-Ala-|-D-Ala. Also transpeptidation of peptidyl-alanyl moieties that are N-acyl substituents of D-alanine.. It participates in cell wall biogenesis; peptidoglycan biosynthesis. In terms of biological role, cell wall formation. Synthesis of cross-linked peptidoglycan from the lipid intermediates. The enzyme has a penicillin-insensitive transglycosylase N-terminal domain (formation of linear glycan strands) and a penicillin-sensitive transpeptidase C-terminal domain (cross-linking of the peptide subunits). This Clostridium perfringens (strain ATCC 13124 / DSM 756 / JCM 1290 / NCIMB 6125 / NCTC 8237 / Type A) protein is Penicillin-binding protein 1A (pbpA).